The chain runs to 696 residues: MSKRNPLERYRNIGIMAHIDAGKTTTSERILFYTGVSHKLGEVHDGAATMDWMEQEQERGITITSAATTCFWKGMAGNYPEHRINVIDTPGHVDFTIEVERSLRVLDGACTVFCSVGGVQPQTETVWRQANKYGVPRLAFVNKMDRSGANFMRVREQMISRLKANPVPIQLPIGAEDKFAGIIDLVKMKAVYWDDASQGTKFEEREIPASQQADAATWREKMIESAAEASEELMNKYLEAGDLAVEDIKQGLRARTINNEIVPMLCGTAFKNKGVQAMLDAVLDYLPSPLDVPAIKGVDENGLEDERGPSEDSPFAALAFKIATDPYVGQLIFFRVYSGTVKSGDTVFNPVKGKRERIGRLLQMHANQREEIKEVGTGDIAAAVGLKEVTTGDTLCDPNHVITLERMDFPEPVIHVAVEPKTKIDQEKMGIALNRLAQEDPSFRVRTDEESGQTIISGMGELHLEIIVDRMKREFGVEANVGAPQVAYREAIRKQVEIEGKFVKQSGGRGQYGHVWLRMEPNEAGKGFEFVDEIKGGAVPREYIPAVEKGLRDSLSNGVLAGYPVVDVKIALFDGSYHDVDSNENAFKMAASIAFKDGMKKASPVLLEPMMAVEVETPSEFMGNVVGDLSSRRGIIQGMEDIPGFKVIRSEVPLAEMFGYSTILRSATQGRATYSMEFKHYSEAPKNVAEAIISKK.

Positions 8 to 290 (ERYRNIGIMA…AVLDYLPSPL (283 aa)) constitute a tr-type G domain. Residues 17-24 (AHIDAGKT), 88-92 (DTPGH), and 142-145 (NKMD) each bind GTP.

The protein belongs to the TRAFAC class translation factor GTPase superfamily. Classic translation factor GTPase family. EF-G/EF-2 subfamily.

The protein resides in the cytoplasm. In terms of biological role, catalyzes the GTP-dependent ribosomal translocation step during translation elongation. During this step, the ribosome changes from the pre-translocational (PRE) to the post-translocational (POST) state as the newly formed A-site-bound peptidyl-tRNA and P-site-bound deacylated tRNA move to the P and E sites, respectively. Catalyzes the coordinated movement of the two tRNA molecules, the mRNA and conformational changes in the ribosome. The chain is Elongation factor G from Nitrosomonas eutropha (strain DSM 101675 / C91 / Nm57).